A 1233-amino-acid polypeptide reads, in one-letter code: Insulin receptor substrate 1 (1233 aa).

S3 carries the phosphoserine modification. The interval 3-133 (SPPDTDGFSD…AGGGCGGSCS (131 aa)) is mediates interaction with PHIP. The PH domain maps to 12 to 115 (DVRKVGYLRK…WYQALLQLHN (104 aa)). S99 is modified (phosphoserine; by CK2). Positions 155–259 (FKEVWQVILK…EAMRAMSDEF (105 aa)) constitute an IRS-type PTB domain. The tract at residues 257-425 (DEFRPRSKSQ…SDGGFISSDE (169 aa)) is disordered. A compositionally biased stretch (low complexity) spans 264-276 (KSQSSSSCSNPIS). S265 and S302 each carry phosphoserine; by RPS6KB1. A Phosphoserine; by IKKB, MAPK8 and RPS6KB1 modification is found at S307. S318, S325, S340, and S343 each carry phosphoserine. Over residues 349-358 (THAHRHRGSS) the composition is skewed to basic residues. 2 stretches are compositionally biased toward low complexity: residues 378-399 (SPSA…GSTS) and 407-419 (SSAS…SDGG). S414 is modified (phosphoserine). Phosphothreonine is present on residues T441 and T448. Y460 bears the Phosphotyrosine; by INSR mark. A YXXM motif 1 motif is present at residues 460-463 (YICM). Residue S522 is modified to Phosphoserine; by RPS6KB1. Short sequence motifs (YXXM motif) lie at residues 546–549 (YTEM) and 608–611 (YMPM). The residue at position 608 (Y608) is a Phosphotyrosine; by INSR. At S612 the chain carries Phosphoserine. Y628 carries the post-translational modification Phosphotyrosine; by INSR. The short motif at 628–631 (YMPM) is the YXXM motif 4 element. At S632 the chain carries Phosphoserine; by RPS6KB1 and ROCK2. Residues 651–720 (QRVDPNGYMM…PPVESGGGKL (70 aa)) are disordered. Y658 is subject to Phosphotyrosine. The short motif at 658–661 (YMMM) is the YXXM motif 5 element. The span at 662–689 (SPSGSCSPDIGGGSSSSSSISAAPSGSS) shows a compositional bias: low complexity. Residues 727–730 (YMNM) carry the YXXM motif 6 motif. The tract at residues 766–985 (FKHTQRPGEP…VPNSRGDYMT (220 aa)) is disordered. Residues 771–780 (RPGEPEEGAR) show a composition bias toward basic and acidic residues. Composition is skewed to low complexity over residues 785–794 (RLSSSSGRLR) and 801–810 (DSSSSTSSDS). S789 is subject to Phosphoserine; by AMPK and SIK2. The residue at position 887 (S887) is a Phosphoserine. Phosphotyrosine; by INSR is present on residues Y891, Y935, and Y983. The GRB2-binding stretch occupies residues 891-893 (YVN). 3 short sequence motifs (YXXM motif) span residues 935-938 (YMNM), 983-986 (YMTM), and 1006-1009 (YADM). The tract at residues 1015–1137 (AEKASLPRPT…GSEDVKRHSS (123 aa)) is disordered. The span at 1032–1042 (STASSSASVTP) shows a compositional bias: low complexity. Composition is skewed to polar residues over residues 1043-1052 (QGATAEQATH) and 1069-1081 (TRVN…NQSA). Phosphoserine occurs at positions 1096 and 1097. Residues 1116–1129 (AAVGGSGGGGGGGS) show a composition bias toward gly residues. Y1173 is modified (phosphotyrosine; by INSR). The interval 1178 to 1233 (LAKEHSQDCPSQQQSLPPPPPHQPLGSNEGNSPRRSSEDLSNYASISFQKQPEDRQ) is disordered. Residue K1180 forms a Glycyl lysine isopeptide (Lys-Gly) (interchain with G-Cter in ubiquitin) linkage. Residues 1203 to 1227 (GSNEGNSPRRSSEDLSNYASISFQK) are compositionally biased toward polar residues. Y1220 is modified (phosphotyrosine; by INSR).

In terms of assembly, interacts (via phosphorylated YXXM motifs) with PIK3R1. Interacts with ROCK1. Interacts with GRB2. Interacts with SOCS7. Interacts (via IRS-type PTB domain) with IGF1R and INSR (via the tyrosine-phosphorylated NPXY motif). Interacts with UBTF and PIK3CA. Interacts (via PH domain) with PHIP. Interacts with FER. Interacts with ALK. Interacts with EIF2AK2/PKR. Interacts with GKAP1. Interacts with DGKZ in the absence of insulin; insulin stimulation decreases this interaction. Found in a ternary complex with DGKZ and PIP5K1A in the absence of insulin stimulation. Interacts with SQSTM1; the interaction is disrupted by the presence of tensin TNS2. Interacts with NCK1 (via SH2 domain). Interacts with NCK2 (via SH3 domain). Interacts with SH2B1; this interaction enhances leptin-induced activation of the PI3-kinase pathway. Interacts with DVL2; this interaction promotes the Wnt/beta-catenin signaling pathway. In terms of processing, serine phosphorylation of IRS1 is a mechanism for insulin resistance. Ser-307 phosphorylation inhibits insulin action through disruption of IRS1 interaction with the insulin receptor. Phosphorylation of Tyr-891 is required for GRB2-binding. Phosphorylated by ALK. Phosphorylated at Ser-265, Ser-302, Ser-632 and Ser-1097 by RPS6KB1; phosphorylation induces accelerated degradation of IRS1. Phosphorylated on tyrosine residues in response to insulin. In skeletal muscles, dephosphorylated on Tyr-608 by TNS2 under anabolic conditions; dephosphorylation results in the proteasomal degradation of IRS1. Post-translationally, ubiquitinated by the Cul7-RING(FBXW8) complex in a mTOR-dependent manner, leading to its degradation: the Cul7-RING(FBXW8) complex recognizes and binds IRS1 previously phosphorylated by S6 kinase (RPS6KB1 or RPS6KB2). Ubiquitinated by TRAF4 through 'Lys-29' linkage; this ubiquitination regulates the interaction of IRS1 with IGFR and IRS1 tyrosine phosphorylation upon IGF1 stimulation. S-nitrosylation at by BLVRB inhibits its activity. Expressed in osteoblasts, but not in osteoclasts.

It localises to the cytoplasm. The protein localises to the nucleus. Its function is as follows. Signaling adapter protein that participates in the signal transduction from two prominent receptor tyrosine kinases, insulin receptor/INSR and insulin-like growth factor I receptor/IGF1R. Plays therefore an important role in development, growth, glucose homeostasis as well as lipid metabolism. Upon phosphorylation by the insulin receptor, functions as a signaling scaffold that propagates insulin action through binding to SH2 domain-containing proteins including the p85 regulatory subunit of PI3K, NCK1, NCK2, GRB2 or SHP2. Recruitment of GRB2 leads to the activation of the guanine nucleotide exchange factor SOS1 which in turn triggers the Ras/Raf/MEK/MAPK signaling cascade. Activation of the PI3K/AKT pathway is responsible for most of insulin metabolic effects in the cell, and the Ras/Raf/MEK/MAPK is involved in the regulation of gene expression and in cooperation with the PI3K pathway regulates cell growth and differentiation. Acts a positive regulator of the Wnt/beta-catenin signaling pathway through suppression of DVL2 autophagy-mediated degradation leading to cell proliferation. In Mus musculus (Mouse), this protein is Insulin receptor substrate 1 (Irs1).